We begin with the raw amino-acid sequence, 225 residues long: Leucyl/phenylalanyl-tRNA--protein transferase (225 aa).

This sequence belongs to the L/F-transferase family.

It localises to the cytoplasm. The enzyme catalyses N-terminal L-lysyl-[protein] + L-leucyl-tRNA(Leu) = N-terminal L-leucyl-L-lysyl-[protein] + tRNA(Leu) + H(+). It carries out the reaction N-terminal L-arginyl-[protein] + L-leucyl-tRNA(Leu) = N-terminal L-leucyl-L-arginyl-[protein] + tRNA(Leu) + H(+). It catalyses the reaction L-phenylalanyl-tRNA(Phe) + an N-terminal L-alpha-aminoacyl-[protein] = an N-terminal L-phenylalanyl-L-alpha-aminoacyl-[protein] + tRNA(Phe). Functionally, functions in the N-end rule pathway of protein degradation where it conjugates Leu, Phe and, less efficiently, Met from aminoacyl-tRNAs to the N-termini of proteins containing an N-terminal arginine or lysine. This is Leucyl/phenylalanyl-tRNA--protein transferase from Nitrobacter winogradskyi (strain ATCC 25391 / DSM 10237 / CIP 104748 / NCIMB 11846 / Nb-255).